Here is a 171-residue protein sequence, read N- to C-terminus: Protein-export protein SecB (171 aa).

This sequence belongs to the SecB family. In terms of assembly, homotetramer, a dimer of dimers. One homotetramer interacts with 1 SecA dimer.

The protein localises to the cytoplasm. In terms of biological role, one of the proteins required for the normal export of preproteins out of the cell cytoplasm. It is a molecular chaperone that binds to a subset of precursor proteins, maintaining them in a translocation-competent state. It also specifically binds to its receptor SecA. This chain is Protein-export protein SecB, found in Histophilus somni (strain 2336) (Haemophilus somnus).